We begin with the raw amino-acid sequence, 230 residues long: uncharacterized protein (230 aa).

The N-terminal stretch at 1 to 18 (MRQYTSKSILFMTAIALS) is a signal peptide.

This is an uncharacterized protein from Pasteurella multocida (strain Pm70).